The following is a 181-amino-acid chain: Adenine phosphoribosyltransferase (181 aa).

It belongs to the purine/pyrimidine phosphoribosyltransferase family. In terms of assembly, homodimer.

The protein localises to the cytoplasm. The enzyme catalyses AMP + diphosphate = 5-phospho-alpha-D-ribose 1-diphosphate + adenine. It participates in purine metabolism; AMP biosynthesis via salvage pathway; AMP from adenine: step 1/1. Functionally, catalyzes a salvage reaction resulting in the formation of AMP, that is energically less costly than de novo synthesis. This is Adenine phosphoribosyltransferase from Shewanella woodyi (strain ATCC 51908 / MS32).